The primary structure comprises 375 residues: Peroxisomal targeting signal 2 receptor (375 aa).

WD repeat units lie at residues 58–89, 102–133, 172–203, 218–249, 281–312, and 340–372; these read LTQD…RLFD, EHER…KIWS, KNRN…SLFD, HSGL…RIWD, AHGL…RIWR, and QHSE…FVWN.

It belongs to the WD repeat peroxin-7 family. Interacts with PEX21.

Its subcellular location is the cytoplasm. It is found in the cytosol. It localises to the peroxisome matrix. Receptor required for the peroxisomal import of proteins containing a C-terminal PTS2-type peroxisomal targeting signal, such as 3-oxoacyl-CoA thiolase. Specifically binds to cargo proteins containing a PTS2 peroxisomal targeting signal in the cytosol. Cargo protein-binding triggers interaction with PEX21 and formation of a ternary complex composed of PEX21 and PEX7 along with PTS2-containing cargo proteins, which is tranlocated into peroxisomes by passing through the PEX13-PEX14 docking complex. The chain is Peroxisomal targeting signal 2 receptor from Saccharomyces cerevisiae (strain ATCC 204508 / S288c) (Baker's yeast).